Here is a 323-residue protein sequence, read N- to C-terminus: NADH-ubiquinone oxidoreductase chain 1 (323 aa).

8 helical membrane-spanning segments follow: residues 8–28 (LLNP…LTLI), 74–94 (LLFI…WLPL), 105–125 (LGML…LGSG), 150–170 (SLGL…LTTF), 176–196 (TIWL…STLA), 227–247 (LFFL…TILF), 258–278 (ELTS…FLWV), and 298–318 (FLPI…FTGS).

It belongs to the complex I subunit 1 family.

The protein localises to the mitochondrion inner membrane. The enzyme catalyses a ubiquinone + NADH + 5 H(+)(in) = a ubiquinol + NAD(+) + 4 H(+)(out). Core subunit of the mitochondrial membrane respiratory chain NADH dehydrogenase (Complex I) that is believed to belong to the minimal assembly required for catalysis. Complex I functions in the transfer of electrons from NADH to the respiratory chain. The immediate electron acceptor for the enzyme is believed to be ubiquinone. The sequence is that of NADH-ubiquinone oxidoreductase chain 1 (MT-ND1) from Latimeria chalumnae (Coelacanth).